The primary structure comprises 769 residues: Polyribonucleotide nucleotidyltransferase (769 aa).

Residues D490 and D496 each coordinate Mg(2+). In terms of domain architecture, KH spans 557 to 616 (PKIDTIMIPVDKIKVVIGKGGEQIDKIIAETGVKIDIDDEGLCSIFSSDQSAIDRAKEII). The S1 motif domain maps to 626–694 (GEVYEAKVVR…DKGRVDASMR (69 aa)). Residues 700-734 (PEGYVEPERKPRERRDNKDRRNGNGFDRRNNDRNN) show a composition bias toward basic and acidic residues. The segment at 700 to 769 (PEGYVEPERK…FPELSTKKPE (70 aa)) is disordered. A compositionally biased stretch (low complexity) spans 736-746 (NNHNNNSGNHS). Over residues 747–769 (FELRERKSHVDHEFPELSTKKPE) the composition is skewed to basic and acidic residues.

Belongs to the polyribonucleotide nucleotidyltransferase family. Requires Mg(2+) as cofactor.

The protein resides in the cytoplasm. It catalyses the reaction RNA(n+1) + phosphate = RNA(n) + a ribonucleoside 5'-diphosphate. Its function is as follows. Involved in mRNA degradation. Catalyzes the phosphorolysis of single-stranded polyribonucleotides processively in the 3'- to 5'-direction. This chain is Polyribonucleotide nucleotidyltransferase, found in Lactococcus lactis subsp. cremoris (strain SK11).